The sequence spans 654 residues: NADPH-dependent diflavin oxidoreductase 1 (654 aa).

A Flavodoxin-like domain is found at 14–166 (ALVLYGSETG…TFIPWITDFR (153 aa)). Residues 20 to 25 (SETGNA), 75 to 78 (STTG), and 113 to 122 (LGDSSYPKFN) each bind FMN. Residues 235 to 485 (PDALTATLVE…QLQRGGLSSS (251 aa)) form the FAD-binding FR-type domain. FAD-binding positions include Arg389, 419 to 422 (RQFS), and 458 to 461 (GVCT). NADP(+) is bound by residues Thr500, 568–569 (SR), and 574–578 (KIYVQ). Trp654 is a binding site for FAD.

This sequence belongs to the NADPH-dependent diflavin oxidoreductase NDOR1 family. In the N-terminal section; belongs to the flavodoxin family. The protein in the C-terminal section; belongs to the flavoprotein pyridine nucleotide cytochrome reductase family. Interacts with dre2; as part of the cytosolic iron-sulfur (Fe-S) protein assembly (CIA) machinery. It depends on FAD as a cofactor. The cofactor is FMN.

It localises to the cytoplasm. Its subcellular location is the mitochondrion. It catalyses the reaction 2 oxidized [2Fe-2S]-[protein] + NADPH = 2 reduced [2Fe-2S]-[protein] + NADP(+) + H(+). NADPH-dependent reductase which is a central component of the cytosolic iron-sulfur (Fe-S) protein assembly (CIA) machinery. Transfers electrons from NADPH via its FAD and FMN prosthetic groups to the [2Fe-2S] cluster of dre2, another key component of the CIA machinery. In turn, this reduced cluster provides electrons for assembly of cytosolic iron-sulfur cluster proteins. Positively controls H(2)O(2)-induced cell death. This chain is NADPH-dependent diflavin oxidoreductase 1, found in Aspergillus fumigatus (strain ATCC MYA-4609 / CBS 101355 / FGSC A1100 / Af293) (Neosartorya fumigata).